The following is a 209-amino-acid chain: Cytidylate kinase (209 aa).

Residue 7–15 (GPAASGKGT) participates in ATP binding.

This sequence belongs to the cytidylate kinase family. Type 1 subfamily.

Its subcellular location is the cytoplasm. The enzyme catalyses CMP + ATP = CDP + ADP. It catalyses the reaction dCMP + ATP = dCDP + ADP. The protein is Cytidylate kinase of Afipia carboxidovorans (strain ATCC 49405 / DSM 1227 / KCTC 32145 / OM5) (Oligotropha carboxidovorans).